We begin with the raw amino-acid sequence, 909 residues long: MWPQPHLPPHPMMSEKTRQNKLAEAKKKFTDYRQWNIAGVGTRATDTKKKKINNGTNPETTTSEGCHSPEDTQQNRAQLKEEKKASHQHQEALRREIEAQDHTIRILTCQKTELETALYYSQDAARKFEDGNLGTPSSFNLALSQAFRGSPLGCVSTSLIPGESKDLAGRLHHSWHFAGELQRALSAVSTWHKKADRYIEELTKERDALSLELYRNTITNEELKKKNAELQEKLRLAESEKSEIQLNVKELKRKLERAKFLLPQVQTNTLQEEMWRQEEELREQEKKIRKQEEKMWRQEERLREQEGKMREQEEKMRRQEKRLREQEKELREQEKELREQKKLREQEEQMQEQEEKMWEQEEKMREQEEKMWRQEERLWEQEKQMREQEQKMRDQEERMWEQDERLREKEERMREQEKMWEQVEKMREEKKMQEQEKKTRDQEEKMQEEERIREREKKMREEEETMREQEEKMQKQEENMWEQEEKEWQQQRLPEQKEKLWEQEKMQEQEEKIWEQEEKIRDQEEMWGQEKKMWRQEKMREQEDVETGGEAAGAGEADVGAGGEDAGSGAEDVGPGGEDVGAGREAAGEGGENAGAEEDVAAGGEDAGGEEDAGAGEEDMGPGGEDARGGEDAGAGEEDAGGGGDDAGAGGEDAGAGREDAGAGGEDVGAGREDAGAGGEDVGAGGEDVGAGRRRCGSSRGCRNRRRSCGNTRRCRSRRSGAEDVGPEGEDVGAGREAAGEGGENAGAEDVAAGGEDAGEEEDAGGEDAGAAREDAGAGGDDVGAGREDAGAGGEDVGAGGEDAGAGGEDAGAGGEDAGPGGEDAGAGGEDAGPGGEDAGAGGEDAGPGGEDVGPGGEDVGAGGEDVGAGGDAREGGEDTRSEREDAGEAARARGAVLRALPPSLQSSL.

Positions 1–11 (MWPQPHLPPHP) are enriched in pro residues. Disordered regions lie at residues 1-88 (MWPQ…ASHQ), 300-362 (ERLR…EQEE), 381-408 (QEKQ…RLRE), 425-494 (KMRE…QRLP), and 524-909 (EEMW…QSSL). Over residues 13–31 (MSEKTRQNKLAEAKKKFTD) the composition is skewed to basic and acidic residues. A compositionally biased stretch (polar residues) spans 53–77 (NNGTNPETTTSEGCHSPEDTQQNRA). The segment covering 78–88 (QLKEEKKASHQ) has biased composition (basic and acidic residues). The stretch at 192 to 526 (HKKADRYIEE…EEKIRDQEEM (335 aa)) forms a coiled coil. Basic and acidic residues-rich tracts occupy residues 425-478 (KMRE…KQEE) and 524-542 (EEMW…MREQ). The segment covering 607–620 (AGGEEDAGAGEEDM) has biased composition (acidic residues). Gly residues-rich tracts occupy residues 641–654 (GGGG…GEDA) and 676–689 (GAGG…GEDV). The segment covering 692-719 (GRRRCGSSRGCRNRRRSCGNTRRCRSRR) has biased composition (basic residues). A compositionally biased stretch (low complexity) spans 746-755 (AGAEDVAAGG). Residues 757–766 (DAGEEEDAGG) are compositionally biased toward acidic residues. The segment covering 791–871 (GAGGEDVGAG…AGGEDVGAGG (81 aa)) has biased composition (gly residues). The segment covering 872 to 892 (DAREGGEDTRSEREDAGEAAR) has biased composition (basic and acidic residues).

Belongs to the GOLGA6 family.

In Homo sapiens (Human), this protein is Golgin subfamily A member 6-like protein 2 (GOLGA6L2).